Consider the following 454-residue polypeptide: tRNA modification GTPase MnmE (454 aa).

Positions 23, 80, and 120 each coordinate (6S)-5-formyl-5,6,7,8-tetrahydrofolate. A TrmE-type G domain is found at 216–377 (TIKIVIAGPP…LKNKILEITT (162 aa)). N226 provides a ligand contact to K(+). GTP contacts are provided by residues 226-231 (NVGKSS), 245-251 (TNIPGTT), and 270-273 (DTAG). Mg(2+) is bound at residue S230. Residues T245, I247, and T250 each contribute to the K(+) site. T251 lines the Mg(2+) pocket. K454 lines the (6S)-5-formyl-5,6,7,8-tetrahydrofolate pocket.

Belongs to the TRAFAC class TrmE-Era-EngA-EngB-Septin-like GTPase superfamily. TrmE GTPase family. As to quaternary structure, homodimer. Heterotetramer of two MnmE and two MnmG subunits. Requires K(+) as cofactor.

It is found in the cytoplasm. Functionally, exhibits a very high intrinsic GTPase hydrolysis rate. Involved in the addition of a carboxymethylaminomethyl (cmnm) group at the wobble position (U34) of certain tRNAs, forming tRNA-cmnm(5)s(2)U34. The polypeptide is tRNA modification GTPase MnmE (Buchnera aphidicola subsp. Cinara cedri (strain Cc)).